Reading from the N-terminus, the 314-residue chain is 4-hydroxy-3-methylbut-2-enyl diphosphate reductase (314 aa).

Cysteine 12 lines the [4Fe-4S] cluster pocket. Positions 41 and 74 each coordinate (2E)-4-hydroxy-3-methylbut-2-enyl diphosphate. Dimethylallyl diphosphate contacts are provided by histidine 41 and histidine 74. The isopentenyl diphosphate site is built by histidine 41 and histidine 74. Cysteine 96 provides a ligand contact to [4Fe-4S] cluster. Histidine 124 is a (2E)-4-hydroxy-3-methylbut-2-enyl diphosphate binding site. Histidine 124 is a binding site for dimethylallyl diphosphate. Isopentenyl diphosphate is bound at residue histidine 124. Glutamate 126 functions as the Proton donor in the catalytic mechanism. Threonine 168 is a binding site for (2E)-4-hydroxy-3-methylbut-2-enyl diphosphate. Cysteine 198 provides a ligand contact to [4Fe-4S] cluster. Positions 226, 227, 228, and 270 each coordinate (2E)-4-hydroxy-3-methylbut-2-enyl diphosphate. Serine 226, serine 227, asparagine 228, and serine 270 together coordinate dimethylallyl diphosphate. Isopentenyl diphosphate is bound by residues serine 226, serine 227, asparagine 228, and serine 270.

The protein belongs to the IspH family. [4Fe-4S] cluster is required as a cofactor.

The enzyme catalyses isopentenyl diphosphate + 2 oxidized [2Fe-2S]-[ferredoxin] + H2O = (2E)-4-hydroxy-3-methylbut-2-enyl diphosphate + 2 reduced [2Fe-2S]-[ferredoxin] + 2 H(+). The catalysed reaction is dimethylallyl diphosphate + 2 oxidized [2Fe-2S]-[ferredoxin] + H2O = (2E)-4-hydroxy-3-methylbut-2-enyl diphosphate + 2 reduced [2Fe-2S]-[ferredoxin] + 2 H(+). It functions in the pathway isoprenoid biosynthesis; dimethylallyl diphosphate biosynthesis; dimethylallyl diphosphate from (2E)-4-hydroxy-3-methylbutenyl diphosphate: step 1/1. It participates in isoprenoid biosynthesis; isopentenyl diphosphate biosynthesis via DXP pathway; isopentenyl diphosphate from 1-deoxy-D-xylulose 5-phosphate: step 6/6. In terms of biological role, catalyzes the conversion of 1-hydroxy-2-methyl-2-(E)-butenyl 4-diphosphate (HMBPP) into a mixture of isopentenyl diphosphate (IPP) and dimethylallyl diphosphate (DMAPP). Acts in the terminal step of the DOXP/MEP pathway for isoprenoid precursor biosynthesis. This Ectopseudomonas mendocina (strain ymp) (Pseudomonas mendocina) protein is 4-hydroxy-3-methylbut-2-enyl diphosphate reductase.